Reading from the N-terminus, the 97-residue chain is MAHKKGASSSRNGRDSTSKRLGVKRFGGQFVHAGEILVRQRGTRFHPGSGVGRGGDDTLFALVSGAVTFGTARGRRVVSVVPAQPAATPAQPAATGS.

A disordered region spans residues 1 to 23 (MAHKKGASSSRNGRDSTSKRLGV).

The protein belongs to the bacterial ribosomal protein bL27 family.

This Acidothermus cellulolyticus (strain ATCC 43068 / DSM 8971 / 11B) protein is Large ribosomal subunit protein bL27.